The primary structure comprises 288 residues: Dichloromethane dehalogenase (288 aa).

The GST N-terminal domain maps to 12–94 (KTLRLLYHPA…YVNEKFDGAG (83 aa)). Positions 100–252 (GTQERAQINQ…ASMFKRKTAV (153 aa)) constitute a GST C-terminal domain.

It belongs to the GST superfamily. As to quaternary structure, homohexamer.

It is found in the cytoplasm. It carries out the reaction dichloromethane + H2O = formaldehyde + 2 chloride + 2 H(+). The protein operates within xenobiotic degradation; dichloromethane degradation. This is Dichloromethane dehalogenase (dcmA) from Methylorubrum extorquens (strain DSM 6343 / CIP 106787 / DM4) (Methylobacterium extorquens).